Reading from the N-terminus, the 385-residue chain is Cytochrome b (385 aa).

4 consecutive transmembrane segments (helical) span residues 32 to 52 (MGSL…FMAM), 76 to 98 (WLLR…MHMA), 113 to 133 (VWII…LGYC), and 179 to 199 (FFAL…MHFM). Heme b-binding residues include His82 and His96. Heme b contacts are provided by His183 and His197. His202 is a binding site for a ubiquinone. The next 4 membrane-spanning stretches (helical) occupy residues 225 to 245 (FIFK…LFVF), 289 to 309 (LLGV…PLTD), 321 to 341 (ISKL…VLGS), and 348 to 368 (FVQM…IFVP).

The protein belongs to the cytochrome b family. In terms of assembly, fungal cytochrome b-c1 complex contains 10 subunits; 3 respiratory subunits, 2 core proteins and 5 low-molecular weight proteins. Cytochrome b-c1 complex is a homodimer. Heme b is required as a cofactor.

It is found in the mitochondrion inner membrane. Component of the ubiquinol-cytochrome c reductase complex (complex III or cytochrome b-c1 complex) that is part of the mitochondrial respiratory chain. The b-c1 complex mediates electron transfer from ubiquinol to cytochrome c. Contributes to the generation of a proton gradient across the mitochondrial membrane that is then used for ATP synthesis. This chain is Cytochrome b (COB), found in Monosporozyma servazzii (Yeast).